The following is a 313-amino-acid chain: Esterase mpl1 (313 aa).

Active-site charge relay system residues include Ser-174, Asp-259, and His-287.

This sequence belongs to the LovG family.

Its pathway is mycotoxin biosynthesis. Esterase; part of the gene cluster that mediates the biosynthesis of the mycotoxin citrinin, a hepato-nephrotoxic compound to humans due to inhibition of respiration complex III. The pathway begins with the synthesis of a keto-aldehyde intermediate by the citrinin PKS (pksCT) from successive condensations of 4 malonyl-CoA units, presumably with a simple acetyl-CoA starter unit. Release of the keto-aldehyde intermediate is consistent with the presence of the C-terminal reductive release domain. Mp11 collaborates with pksCT by catalyzing the hydrolysis of ACP-bound acyl intermediates to free the ACP from stalled intermediates. Mpl2 then catalyzes the oxidation of the C-12 methyl of the ketone intermediate to an alcohol intermediate which is further oxidized by the oxidoreductase mpl7 to produce a bisaldehyde intermediate. The fourth catalytic step is catalyzed by the mpl4 aldehyde dehydrogenase. The final transformation is the reduction of C-3 by mpl6 to provide the chemically stable citrinin nucleus. This is Esterase mpl1 from Monascus purpureus (Red mold).